Consider the following 211-residue polypeptide: tRNA (guanine-N(7)-)-methyltransferase (211 aa).

S-adenosyl-L-methionine-binding residues include glutamate 44, aspartate 69, aspartate 96, and aspartate 118. The active site involves aspartate 118. Residue lysine 122 coordinates substrate. The interval 124–129 is interaction with RNA; it reads RHEKRR. Substrate-binding positions include aspartate 154 and 191–194; that span reads TEYE.

Belongs to the class I-like SAM-binding methyltransferase superfamily. TrmB family.

It catalyses the reaction guanosine(46) in tRNA + S-adenosyl-L-methionine = N(7)-methylguanosine(46) in tRNA + S-adenosyl-L-homocysteine. It participates in tRNA modification; N(7)-methylguanine-tRNA biosynthesis. Catalyzes the formation of N(7)-methylguanine at position 46 (m7G46) in tRNA. This chain is tRNA (guanine-N(7)-)-methyltransferase, found in Streptococcus pneumoniae (strain Taiwan19F-14).